Here is a 354-residue protein sequence, read N- to C-terminus: Biotin synthase (354 aa).

The Radical SAM core domain maps to 64-282 (GDVELATLLS…IAVARITMPR (219 aa)). Residues C79, C83, and C86 each contribute to the [4Fe-4S] cluster site. Residues C123, C154, C214, and R286 each contribute to the [2Fe-2S] cluster site.

It belongs to the radical SAM superfamily. Biotin synthase family. As to quaternary structure, homodimer. It depends on [4Fe-4S] cluster as a cofactor. [2Fe-2S] cluster is required as a cofactor.

It catalyses the reaction (4R,5S)-dethiobiotin + (sulfur carrier)-SH + 2 reduced [2Fe-2S]-[ferredoxin] + 2 S-adenosyl-L-methionine = (sulfur carrier)-H + biotin + 2 5'-deoxyadenosine + 2 L-methionine + 2 oxidized [2Fe-2S]-[ferredoxin]. It functions in the pathway cofactor biosynthesis; biotin biosynthesis; biotin from 7,8-diaminononanoate: step 2/2. Its function is as follows. Catalyzes the conversion of dethiobiotin (DTB) to biotin by the insertion of a sulfur atom into dethiobiotin via a radical-based mechanism. In Paracidovorax citrulli (strain AAC00-1) (Acidovorax citrulli), this protein is Biotin synthase.